Reading from the N-terminus, the 265-residue chain is 4-hydroxy-tetrahydrodipicolinate reductase (265 aa).

16–21 (GANGKM) is an NAD(+) binding site. An NADP(+)-binding site is contributed by R43. NAD(+) is bound by residues 106 to 108 (GTT) and 130 to 133 (SENF). H164 serves as the catalytic Proton donor/acceptor. A (S)-2,3,4,5-tetrahydrodipicolinate-binding site is contributed by H165. The active-site Proton donor is the K168. 174-175 (AT) is a binding site for (S)-2,3,4,5-tetrahydrodipicolinate.

The protein belongs to the DapB family. As to quaternary structure, homotetramer.

Its subcellular location is the cytoplasm. It carries out the reaction (S)-2,3,4,5-tetrahydrodipicolinate + NAD(+) + H2O = (2S,4S)-4-hydroxy-2,3,4,5-tetrahydrodipicolinate + NADH + H(+). The catalysed reaction is (S)-2,3,4,5-tetrahydrodipicolinate + NADP(+) + H2O = (2S,4S)-4-hydroxy-2,3,4,5-tetrahydrodipicolinate + NADPH + H(+). Its pathway is amino-acid biosynthesis; L-lysine biosynthesis via DAP pathway; (S)-tetrahydrodipicolinate from L-aspartate: step 4/4. Its function is as follows. Catalyzes the conversion of 4-hydroxy-tetrahydrodipicolinate (HTPA) to tetrahydrodipicolinate. This is 4-hydroxy-tetrahydrodipicolinate reductase from Wigglesworthia glossinidia brevipalpis.